Consider the following 219-residue polypeptide: MGQKVNPVGLRVGVIRDWESRWFAEKDYATLLHEDIKIREYITARLKDSSVSKVEIERAANRVNVTIHTAKPGMVIGKGGTEVEALRKALNQLTGKRVHINILEVKKADLDAKLVAENIARQLENRVSFRRAQKQVIQRAMRAGAKGIKTQVSGRLGGADIARAESYSEGTVPLHTLRADIDYATAEADTTYGKLGVKVWIYRGEVLPSKKKASEEGGK.

A KH type-2 domain is found at 38–106 (IREYITARLK…RVHINILEVK (69 aa)).

Belongs to the universal ribosomal protein uS3 family. In terms of assembly, part of the 30S ribosomal subunit. Forms a tight complex with proteins S10 and S14.

Its function is as follows. Binds the lower part of the 30S subunit head. Binds mRNA in the 70S ribosome, positioning it for translation. The protein is Small ribosomal subunit protein uS3 of Bacillus cytotoxicus (strain DSM 22905 / CIP 110041 / 391-98 / NVH 391-98).